A 971-amino-acid chain; its full sequence is Unconventional myosin-XIX (971 aa).

A disordered region spans residues 1-25 (MSRPLSKNTEREPKQINGHQNNLSN). Residues 48-755 (HLYDDLTKVN…MVELLEERRL (708 aa)) enclose the Myosin motor domain. 145–152 (GESGAGKT) provides a ligand contact to ATP. Residues 611 to 633 (LESLMQILHSTTPHYIRCIKPNV) form an actin-binding region. IQ domains lie at 758–787 (ISSK…ATTI) and 780–809 (QSKA…AATV). A myMOMA region region spans residues 826–971 (AAELDDSTED…FNEILLEKTV (146 aa)).

This sequence belongs to the TRAFAC class myosin-kinesin ATPase superfamily. Myosin family. As to quaternary structure, myosin is a hexamer of 2 heavy chains and 4 light chains.

Its subcellular location is the mitochondrion outer membrane. It localises to the cytoplasm. It is found in the cytoskeleton. Functionally, actin-based motor molecule with ATPase activity that localizes to the mitochondrion outer membrane. Motor protein that moves towards the plus-end of actin filaments. Required for mitochondrial inheritance during mitosis. May be involved in mitochondrial transport or positioning. In Xenopus laevis (African clawed frog), this protein is Unconventional myosin-XIX.